Consider the following 682-residue polypeptide: Probable methyltransferase PMT12 (682 aa).

Residues 1–11 (MKLFLNSNLLR) are Cytoplasmic-facing. The chain crosses the membrane as a helical; Signal-anchor for type II membrane protein span at residues 12–32 (NSIFFKISAFVLISVACFFLG). Residues 33-682 (KHWSEDGFRR…KRRKTKGKRA (650 aa)) lie on the Lumenal side of the membrane. Residues Asn67, Asn103, Asn125, Asn155, Asn173, Asn193, Asn273, Asn350, Asn395, Asn419, Asn600, and Asn625 are each glycosylated (N-linked (GlcNAc...) asparagine).

The protein belongs to the methyltransferase superfamily.

It is found in the golgi apparatus membrane. This chain is Probable methyltransferase PMT12, found in Arabidopsis thaliana (Mouse-ear cress).